Here is a 408-residue protein sequence, read N- to C-terminus: Snake venom metalloproteinase BaP1 (408 aa).

Residues 1–20 form the signal peptide; it reads MIEVLLVTICLAVFPYQGSS. The propeptide occupies 21-191; the sequence is IILESGNVND…KASQSNLTPE (171 aa). Gln-192 bears the Pyrrolidone carboxylic acid mark. Residues 198–394 enclose the Peptidase M12B domain; sequence RYIELAVVAD…HNPQCILNKP (197 aa). 3 disulfides stabilise this stretch: Cys-309–Cys-389, Cys-349–Cys-373, and Cys-351–Cys-356. His-334 is a binding site for Zn(2+). Glu-335 is a catalytic residue. Zn(2+)-binding residues include His-338 and His-344. The propeptide occupies 395 to 408; the sequence is LLTVSGNELLEAGE.

Belongs to the venom metalloproteinase (M12B) family. P-I subfamily. In terms of assembly, monomer. Requires Zn(2+) as cofactor. As to expression, expressed by the venom gland.

Its subcellular location is the secreted. With respect to regulation, inhibited by EDTA, partially inhibited by o-phenantropine, and not inhibited by PMSF, pepstatin A, and aprotinin. In terms of biological role, zinc metalloprotease that exhibits a weak hemorrhagic activity (with a minimum hemorrhagic dose of 20 ug by intradermal and intramuscular injection into mice). The basal membrane components collagen (all chains of type IV) (COL4A4), laminin and nidogen are all degraded by this toxin. Rapidly degrades the Aalpha-chain (FGA) of fibrinogen, and later on, degrades the Bbeta-chain (FGB) of fibrinogen. Also activates the complement system, and induces rat neutrophil chemotaxis. Induces edema in mouse food pad and shows a mild myotoxicity. The protein is Snake venom metalloproteinase BaP1 of Bothrops asper (Terciopelo).